The chain runs to 594 residues: MEFPGSSDNYLTITGPGHPFLTGTETFHTPSLGDEEFEIPPISLDSDPSLAVSDVVGHFDDLADSSGVQDEGFAAQYGVQTLDMPVEMAHEVMDQTGGLLGAGLAMDLDHPIVTPYSANPPVTIDVSMTDMSSGILGHGQLTTIDQSELSSQLGLSLGGGTILHPVQSPDDHLSPTPSPTSSLHDEDMEDFRRITAPKSIIVEQTKKPKTPKKKKKKDPNEPQKPLSAYALFFRDTQAAIKGQNPNATFGEVSKIVASMWDSLGEEQKQVYKRKTEAAKKEYLKALALYKANQLSQVAVDTVDLDPPAVPALLSESPVPSPTVVTATSIPECVSSPSVSSSPSQTVAAPQQSIAKIIISKQILPAGQGSTAIAMSQGMVTVIPATVVTSRGLPLAQLQPSPQAQRITRSVLQAAMQMPPRLQPPPLQQMQQPPRLLQMAPAQQPSITILQAPPPLQPMQKVRLSLQPPPLQIKIIPPPLQPQPQVVQVQNQSLSVINVPASPEAPASPPEQLEVLPEVVQEESPPPQMDVELVSSSPPPSLSPQCVRSGCENPPVECKDWDNEYCSNECVVKHCRDTFMSWIATRSQGTLAPVK.

Disordered regions lie at residues 160–225 and 522–545; these read GTIL…PQKP and ESPPPQMDVELVSSSPPPSLSPQC. Over residues 207-217 the composition is skewed to basic residues; it reads KPKTPKKKKKK. Positions 212–217 match the Nuclear localization signal motif; the sequence is KKKKKK. The HMG box DNA-binding region spans 222-290; it reads PQKPLSAYAL…EYLKALALYK (69 aa).

Component of the PNUTS-PP1 phosphatase complex.

It localises to the nucleus. The protein localises to the chromosome. Functionally, transcription factor that modulates cell fate reprogramming from the somatic state to the pluripotent and neuronal fate. Also acts as a regulatory component of protein phosphatase 1 (PP1) complexes. Component of the PNUTS-PP1 protein phosphatase complex, a PP1 complex that regulates RNA polymerase II transcription pause-release. PNUTS-PP1 also plays a role in the control of chromatin structure and cell cycle progression during the transition from mitosis into interphase. The protein is TOX high mobility group box family member 4-B (tox4-b) of Xenopus laevis (African clawed frog).